A 354-amino-acid chain; its full sequence is Guanine nucleotide-binding protein alpha-3 subunit (354 aa).

Gly2 carries N-myristoyl glycine lipidation. Cys4 carries S-palmitoyl cysteine lipidation. In terms of domain architecture, G-alpha spans Lys33 to Leu354. Residues Lys36 to Thr49 form a G1 motif region. Residues Gly41–Ser48, Leu177–Thr183, Asp202–Gln206, Asn271–Asp274, and Ala326 contribute to the GTP site. Mg(2+) is bound by residues Ser48 and Thr183. Residues Asp175–Thr183 are G2 motif. A G3 motif region spans residues Ile198–Arg207. A G4 motif region spans residues Ile267–Asp274. Residues Thr324–Thr329 are G5 motif.

The protein belongs to the G-alpha family. As to quaternary structure, g proteins are composed of 3 units; alpha, beta and gamma. The alpha chain contains the guanine nucleotide binding site.

Its function is as follows. Guanine nucleotide-binding proteins (G proteins) are involved as modulators or transducers in various transmembrane signaling systems. This subunit is involved in cAMP regulation and morphogenesis. It is essential for dimorphic switching in haploid cells. The protein is Guanine nucleotide-binding protein alpha-3 subunit (FIL1) of Ustilago hordei (Barley covered smut fungus).